Consider the following 125-residue polypeptide: Small ribosomal subunit protein uS12 (125 aa).

D89 carries the 3-methylthioaspartic acid modification.

The protein belongs to the universal ribosomal protein uS12 family. As to quaternary structure, part of the 30S ribosomal subunit. Contacts proteins S8 and S17. May interact with IF1 in the 30S initiation complex.

In terms of biological role, with S4 and S5 plays an important role in translational accuracy. Its function is as follows. Interacts with and stabilizes bases of the 16S rRNA that are involved in tRNA selection in the A site and with the mRNA backbone. Located at the interface of the 30S and 50S subunits, it traverses the body of the 30S subunit contacting proteins on the other side and probably holding the rRNA structure together. The combined cluster of proteins S8, S12 and S17 appears to hold together the shoulder and platform of the 30S subunit. The protein is Small ribosomal subunit protein uS12 of Clostridium botulinum (strain Alaska E43 / Type E3).